A 210-amino-acid polypeptide reads, in one-letter code: Probable septum site-determining protein MinC (210 aa).

This sequence belongs to the MinC family. Interacts with MinD and FtsZ.

In terms of biological role, cell division inhibitor that blocks the formation of polar Z ring septums. Rapidly oscillates between the poles of the cell to destabilize FtsZ filaments that have formed before they mature into polar Z rings. Prevents FtsZ polymerization. The polypeptide is Probable septum site-determining protein MinC (Thermotoga neapolitana (strain ATCC 49049 / DSM 4359 / NBRC 107923 / NS-E)).